The following is a 190-amino-acid chain: Ribosome-recycling factor (190 aa).

This sequence belongs to the RRF family.

It is found in the cytoplasm. Its function is as follows. Responsible for the release of ribosomes from messenger RNA at the termination of protein biosynthesis. May increase the efficiency of translation by recycling ribosomes from one round of translation to another. The sequence is that of Ribosome-recycling factor from Fusobacterium nucleatum subsp. nucleatum (strain ATCC 25586 / DSM 15643 / BCRC 10681 / CIP 101130 / JCM 8532 / KCTC 2640 / LMG 13131 / VPI 4355).